The primary structure comprises 109 residues: Large ribosomal subunit protein uL22 (109 aa).

This sequence belongs to the universal ribosomal protein uL22 family. As to quaternary structure, part of the 50S ribosomal subunit.

Its function is as follows. This protein binds specifically to 23S rRNA; its binding is stimulated by other ribosomal proteins, e.g. L4, L17, and L20. It is important during the early stages of 50S assembly. It makes multiple contacts with different domains of the 23S rRNA in the assembled 50S subunit and ribosome. The globular domain of the protein is located near the polypeptide exit tunnel on the outside of the subunit, while an extended beta-hairpin is found that lines the wall of the exit tunnel in the center of the 70S ribosome. The sequence is that of Large ribosomal subunit protein uL22 from Thiobacillus denitrificans (strain ATCC 25259 / T1).